We begin with the raw amino-acid sequence, 417 residues long: Zinc finger CCCH domain-containing protein ZFN-like (417 aa).

2 C3H1-type zinc fingers span residues 31-58 and 75-103; these read PGEPDCSYYIRTGLCRFGATCRFNHPPN and RLGQPECQYYLKTGTCKFGATCRFHHPKD. A C3H1-type 3; degenerate zinc finger spans residues 121–149; sequence RPNESERAYYLRTGQCKFGNTCKFHHPQP. 2 consecutive C3H1-type zinc fingers follow at residues 278–306 and 324–352; these read RPDQPECQFYMKTGDCKFGAVCRFHHPRE and RPGEPLCVFYSRYGICKFGPSCKFDHPMG. The segment at 383–417 is disordered; sequence SSEGLVESGTAKPRRLSLSETRPIPPGDDNIDDEG.

The protein localises to the nucleus. The sequence is that of Zinc finger CCCH domain-containing protein ZFN-like from Pisum sativum (Garden pea).